The chain runs to 248 residues: Small ribosomal subunit protein uS2 (248 aa).

Belongs to the universal ribosomal protein uS2 family.

The chain is Small ribosomal subunit protein uS2 from Dechloromonas aromatica (strain RCB).